The sequence spans 335 residues: Probable cytosolic iron-sulfur protein assembly protein Ciao1 (335 aa).

WD repeat units lie at residues 12-51 (GHKG…WSTK), 57-96 (GHKR…FECN), 101-140 (GHEN…EFEC), 146-185 (SHTQ…NDWD), 192-231 (SHTS…NSAG), 250-289 (QHSR…KPDE), and 301-335 (AHDQ…KVTE).

Belongs to the WD repeat CIA1 family.

Functionally, essential component of the cytosolic iron-sulfur (Fe/S) protein assembly machinery. Required for the maturation of extramitochondrial Fe/S proteins. This Drosophila erecta (Fruit fly) protein is Probable cytosolic iron-sulfur protein assembly protein Ciao1.